The following is a 327-amino-acid chain: Mitochondrial thiamine pyrophosphate carrier 1 (327 aa).

Solcar repeat units lie at residues 13 to 114 (GSKL…AAQL), 126 to 214 (PAAA…LRAP), and 222 to 317 (FWGG…VLRA). The next 6 helical transmembrane spans lie at 16 to 36 (LQVVVAGATAGMIARFVIAPL), 95 to 111 (LLYITYSAVQFATYRSA), 132 to 152 (FVAGAAAGVTSTTVTYPLDLL), 189 to 209 (GIGPAVGQTFPFMGIFFAAYE), 223 to 245 (WGGQLALASMTASTLAKTAVFPL), and 292 to 309 (GLTVSLIKSAPASAVTMW).

The protein belongs to the mitochondrial carrier (TC 2.A.29) family.

The protein localises to the mitochondrion inner membrane. In terms of biological role, mitochondrial transporter that mediates uptake of thiamine pyrophosphate (ThPP) into mitochondria. This chain is Mitochondrial thiamine pyrophosphate carrier 1 (TPC1), found in Pyricularia oryzae (strain 70-15 / ATCC MYA-4617 / FGSC 8958) (Rice blast fungus).